The following is a 150-amino-acid chain: Large ribosomal subunit protein bL9 (150 aa).

Belongs to the bacterial ribosomal protein bL9 family.

Binds to the 23S rRNA. The chain is Large ribosomal subunit protein bL9 from Vibrio atlanticus (strain LGP32) (Vibrio splendidus (strain Mel32)).